We begin with the raw amino-acid sequence, 84 residues long: MYB-like transcription factor TCL1 (84 aa).

Positions T36–W73 constitute a Myb-like domain.

As to expression, expressed in inflorescences and trichomes of rosette and cauline leaves.

It localises to the nucleus. Its function is as follows. MYB-type transcription factor involved in trichome cell specification. Acts as a negative regulator of trichome patterning and formation by direct binding to the cis-acting regulatory elements of GL1, thus suppressing the expression of GL1. This is MYB-like transcription factor TCL1 (TCL1) from Arabidopsis thaliana (Mouse-ear cress).